Consider the following 928-residue polypeptide: MYCBP-associated protein (928 aa).

Disordered stretches follow at residues 1-38 (MKKA…PVSN) and 164-183 (EEPK…APPL). A compositionally biased stretch (basic and acidic residues) spans 164-177 (EEPKPKSPKEEKRP). Ser-557 is modified (phosphoserine). The residue at position 558 (Thr-558) is a Phosphothreonine. At Ser-564 the chain carries Phosphoserine. The interval 786 to 881 (IPDEGQKSPP…SSATSQEPID (96 aa)) is disordered. A compositionally biased stretch (basic and acidic residues) spans 806–865 (LGKEDRRGGAQEKKQLSARDKEEKKGSKTPSKEDRLNSKKQKAKDDKKVVKSTSRDRLLS).

As to quaternary structure, interacts with MYCBP. Expressed in brain, retina, testis, heart and lung. Not detected in liver, kidney or intestine. In brain, highly abundant in CNS neurons of the hippocampus and cerebellum. Strongly expressed in cochlea and vestibular sensory epithelia. In both the organ of Corti and the vestibular organ, expression is restricted to hair cells.

Its subcellular location is the cytoplasm. It localises to the membrane. In terms of biological role, may play a role in spermatogenesis. May be involved in synaptic processes. The sequence is that of MYCBP-associated protein from Rattus norvegicus (Rat).